The chain runs to 93 residues: Putative pterin-4-alpha-carbinolamine dehydratase (93 aa).

It belongs to the pterin-4-alpha-carbinolamine dehydratase family.

The enzyme catalyses (4aS,6R)-4a-hydroxy-L-erythro-5,6,7,8-tetrahydrobiopterin = (6R)-L-erythro-6,7-dihydrobiopterin + H2O. This chain is Putative pterin-4-alpha-carbinolamine dehydratase, found in Mycolicibacterium vanbaalenii (strain DSM 7251 / JCM 13017 / BCRC 16820 / KCTC 9966 / NRRL B-24157 / PYR-1) (Mycobacterium vanbaalenii).